We begin with the raw amino-acid sequence, 248 residues long: UPF0280 protein Maeo_0343 (248 aa).

Belongs to the UPF0280 family.

In Methanococcus aeolicus (strain ATCC BAA-1280 / DSM 17508 / OCM 812 / Nankai-3), this protein is UPF0280 protein Maeo_0343.